Consider the following 422-residue polypeptide: Zinc finger and BTB domain-containing protein 42 (422 aa).

In terms of domain architecture, BTB spans 24–92 (CDCTVLVGDA…MYEGRLDLRS (69 aa)). 3 disordered regions span residues 121 to 141 (KDRSLDPGNPAPGAEPAQPPC), 166 to 188 (AALPPRASGPPPCQVPEESDQAL), and 207 to 256 (LQTP…AAKG). Over residues 243 to 252 (HSPPKPPPVP) the composition is skewed to pro residues. C2H2-type zinc fingers lie at residues 294–316 (CICPLCSKLFPSSHVLQLHLSAH), 334–356 (PTCPLCGKTFSCTYTLKRHERTH), 362–384 (YTCVQCGKSFQYSHNLSRHTVVH), and 390–413 (HACRWCERRFTQSGDLYRHVRKFH).

Belongs to the krueppel C2H2-type zinc-finger protein family. ZBTB18 subfamily. Expressed in skeletal muscle (at protein level).

It is found in the cytoplasm. The protein localises to the nucleus. Its subcellular location is the nucleoplasm. In terms of biological role, transcriptional repressor. Specifically binds DNA and probably acts by recruiting chromatin remodeling multiprotein complexes. The sequence is that of Zinc finger and BTB domain-containing protein 42 (ZBTB42) from Homo sapiens (Human).